The sequence spans 513 residues: Steroid (22S)-hydroxylase (513 aa).

Residues 8–28 form a helical membrane-spanning segment; it reads TLLPLLLLPSLLSLLLFLILL. The interval 252-277 is disordered; that stretch reads DIKEEDQEEEEVKTEDEAEMSKSDHV. Residues 254-269 show a composition bias toward acidic residues; sequence KEEDQEEEEVKTEDEA. Cysteine 462 is a heme binding site.

Belongs to the cytochrome P450 family. The cofactor is heme. In terms of tissue distribution, expressed in stems, leaves, shoots, and roots, with a higher expression in siliques and apical shoots.

The protein localises to the membrane. The catalysed reaction is a C27-steroid + reduced [NADPH--hemoprotein reductase] + O2 = a (22S)-22-hydroxy C27-steroid + oxidized [NADPH--hemoprotein reductase] + H2O + H(+). The enzyme catalyses a C28-steroid + reduced [NADPH--hemoprotein reductase] + O2 = a (22S)-22-hydroxy C28-steroid + oxidized [NADPH--hemoprotein reductase] + H2O + H(+). It carries out the reaction a C29-steroid + reduced [NADPH--hemoprotein reductase] + O2 = a (22S)-22-hydroxy C29-steroid + oxidized [NADPH--hemoprotein reductase] + H2O + H(+). It catalyses the reaction cholesterol + reduced [NADPH--hemoprotein reductase] + O2 = (22S)-22-hydroxycholesterol + oxidized [NADPH--hemoprotein reductase] + H2O + H(+). The catalysed reaction is cholestanol + reduced [NADPH--hemoprotein reductase] + O2 = (22S)-22-hydroxycholestanol + oxidized [NADPH--hemoprotein reductase] + H2O + H(+). The enzyme catalyses campestanol + reduced [NADPH--hemoprotein reductase] + O2 = 6-deoxycathasterone + oxidized [NADPH--hemoprotein reductase] + H2O + H(+). It carries out the reaction campesterol + reduced [NADPH--hemoprotein reductase] + O2 = (22S)-22-hydroxycampesterol + oxidized [NADPH--hemoprotein reductase] + H2O + H(+). It catalyses the reaction 6-oxocampestanol + reduced [NADPH--hemoprotein reductase] + O2 = cathasterone + oxidized [NADPH--hemoprotein reductase] + H2O + H(+). The catalysed reaction is sitosterol + reduced [NADPH--hemoprotein reductase] + O2 = (22S)-22-hydroxysitosterol + oxidized [NADPH--hemoprotein reductase] + H2O + H(+). It functions in the pathway plant hormone biosynthesis; brassinosteroid biosynthesis. Functionally, catalyzes the C22-alpha-hydroxylation step in brassinosteroids biosynthesis. Converts campesterol (CR) to (22S)-22-hydroxycampesterol (22-OHCR, 22-hydroxyCR), campestanol (CN) to 6-deoxycathasterone (6-deoxoCT), and 6-oxocampestanol (6-oxoCN) to cathasterone (CT). Can also use cholesterol and cholestanol as substrates. This is Steroid (22S)-hydroxylase from Arabidopsis thaliana (Mouse-ear cress).